Consider the following 632-residue polypeptide: Protein EAP1 (632 aa).

Disordered stretches follow at residues Met-1–Lys-80, Met-149–Glu-204, and Lys-248–Ser-313. Composition is skewed to polar residues over residues Ser-7–Phe-38 and Val-54–Gly-69. Ser-30 is subject to Phosphoserine. A phosphoserine mark is found at Ser-281 and Ser-282. The segment covering Asn-288 to Ser-298 has biased composition (basic and acidic residues). 2 positions are modified to phosphoserine: Ser-327 and Ser-344. The disordered stretch occupies residues Ser-347–Ser-378. Residues Asn-353 to Ser-371 show a composition bias toward low complexity. The residue at position 387 (Ser-387) is a Phosphoserine. Disordered stretches follow at residues Gln-429–Pro-541 and Gln-587–Lys-632. An ATP-binding site is contributed by Gly-440–Ser-447. Residues Pro-474–Gly-486 are compositionally biased toward pro residues. Over residues Lys-492–Leu-505 the composition is skewed to basic and acidic residues. Composition is skewed to polar residues over residues Gln-507–Asn-516, Phe-590–Pro-603, and Ile-610–Leu-621.

In terms of assembly, interacts with SMY2, SYH1 and eIF4E.

The protein localises to the cytoplasm. In terms of biological role, can regulate translation through binding to eIF4E. Competes with eIF4G and p20 for binding to eIF4E in vivo and inhibits cap-dependent translation in vitro. Plays a role in cell growth and is implicated in the TOR signaling cascade. Functions independently of eIF4E to maintain genetic stability and to attenuate GCN4 translation upon TOR inactivation. The sequence is that of Protein EAP1 (EAP1) from Saccharomyces cerevisiae (strain ATCC 204508 / S288c) (Baker's yeast).